A 262-amino-acid chain; its full sequence is MSQLQEMMTVVSQREAAYNIFEMVLKGTLVDEMDLPGQFLHLAVSNGAMLLRRPISISSWDKRAKTCTILYRIGDETTGTYELSKLEPGAKVDIMGPLGNGFPVAEVTSTDKILIIGGGIGVPPLYELAKQLEKTGCQMTILLGFASENVKILENEFSNLKNVTLKIATDDGSYGTKGHVGMLMNEIDFEADALYTCGAPAMLKAVAKKYDQLERLYISMESRMACGIGACYACVEHDKEDESHALKVCEDGPVFLGKQLSL.

An FAD-binding FR-type domain is found at 3 to 104 (QLQEMMTVVS…MGPLGNGFPV (102 aa)). FAD-binding positions include 53 to 56 (RPIS), 70 to 72 (LYR), and 79 to 80 (GT). Residues Cys226, Cys231, Cys234, and Cys249 each coordinate [2Fe-2S] cluster.

It belongs to the PyrK family. As to quaternary structure, heterotetramer of 2 PyrK and 2 PyrD type B subunits. Requires [2Fe-2S] cluster as cofactor. FAD is required as a cofactor.

It functions in the pathway pyrimidine metabolism; UMP biosynthesis via de novo pathway; orotate from (S)-dihydroorotate (NAD(+) route): step 1/1. In terms of biological role, responsible for channeling the electrons from the oxidation of dihydroorotate from the FMN redox center in the PyrD type B subunit to the ultimate electron acceptor NAD(+). The polypeptide is Dihydroorotate dehydrogenase B (NAD(+)), electron transfer subunit (Lactococcus lactis subsp. cremoris (strain SK11)).